A 1151-amino-acid polypeptide reads, in one-letter code: Syntaxin-binding protein 5 (1151 aa).

Residues 14-34 (TAGSSSASQQQQQQHPPGNRE) form a disordered region. The span at 17 to 27 (SSSASQQQQQQ) shows a compositional bias: low complexity. WD repeat units follow at residues 61-94 (SALAFDPVQKILAVGTQTGALRLFGRPGVECYCQ), 101-140 (VIQLQFLINEGALVSALADDTLHLWNLRQKRPAILHSLKF), 145-181 (VTFCHLPFQSKWLYVGTERGNIHIVNVESFTLSGYVI), 200-234 (HISDNPMDEGKLLIGFESGTVVLWDLKSKKADYRY), 240-272 (IHSVAWHHEGKQFICSHSDGTLTIWNVRSPAKP), 294-336 (PILK…KSTA), 344-378 (IVDFLTLCETPYPNDFQEPYAVVVLLEKDLVLIDL), 400-477 (TCCE…YKLK), 505-619 (QIIS…ELVI), and 633-695 (TSLA…SGAG). Disordered regions lie at residues 555–595 (ETPE…GLRD) and 674–729 (SNDP…EQKM). Phosphoserine is present on Ser-692. Positions 712 to 721 (SPTSGSSSPH) are enriched in low complexity. At Ser-723 the chain carries Phosphoserine; by PKA. Residue Ser-759 is modified to Phosphoserine. At Thr-762 the chain carries Phosphothreonine. At Ser-782 the chain carries Phosphoserine. Position 784 is a phosphothreonine (Thr-784). Position 785 is a phosphoserine (Ser-785). 4 WD repeats span residues 794-851 (ISAL…SGTI), 860-934 (RMAF…QNCA), 939-983 (ITET…LDVY), and 997-1020 (CFTNNGQALYLVSPTEIQRLTYSQ). Over residues 881 to 892 (HNVPEEKDEKEK) the composition is skewed to basic and acidic residues. A disordered region spans residues 881–906 (HNVPEEKDEKEKLKKRRPVSVSPSSS). 2 positions are modified to phosphoserine: Ser-900 and Ser-902. At Thr-1039 the chain carries Phosphothreonine. Phosphoserine is present on residues Ser-1058 and Ser-1131. The region spanning 1086–1146 (GIEGVKGAAS…HEIMLKYKDK (61 aa)) is the v-SNARE coiled-coil homology domain.

Belongs to the WD repeat L(2)GL family. In terms of assembly, interacts with STX1A and STX1B via its v-SNARE homology domain. Part of a complex that contains STX1, STXBP5, SNAP25 and SYT1. Part of a complex that contains STXBP5, STX4A and SNAP23.

Its subcellular location is the cytoplasm. It localises to the cell membrane. The protein localises to the cytoplasmic vesicle membrane. The protein resides in the cytoplasmic vesicle. It is found in the secretory vesicle. Its subcellular location is the synaptic vesicle. It localises to the synapse. Plays a regulatory role in calcium-dependent exocytosis and neurotransmitter release. Inhibits membrane fusion between transport vesicles and the plasma membrane. May modulate the assembly of trans-SNARE complexes between transport vesicles and the plasma membrane. Inhibits translocation of GLUT4 from intracellular vesicles to the plasma membrane. Competes with STXBP1 for STX1 binding. The protein is Syntaxin-binding protein 5 (STXBP5) of Homo sapiens (Human).